A 458-amino-acid polypeptide reads, in one-letter code: ATP synthase subunit beta (458 aa).

Residue 148–155 (GGAGVGKT) participates in ATP binding.

The protein belongs to the ATPase alpha/beta chains family. As to quaternary structure, F-type ATPases have 2 components, CF(1) - the catalytic core - and CF(0) - the membrane proton channel. CF(1) has five subunits: alpha(3), beta(3), gamma(1), delta(1), epsilon(1). CF(0) has three main subunits: a(1), b(2) and c(9-12). The alpha and beta chains form an alternating ring which encloses part of the gamma chain. CF(1) is attached to CF(0) by a central stalk formed by the gamma and epsilon chains, while a peripheral stalk is formed by the delta and b chains.

Its subcellular location is the cell inner membrane. It carries out the reaction ATP + H2O + 4 H(+)(in) = ADP + phosphate + 5 H(+)(out). Its function is as follows. Produces ATP from ADP in the presence of a proton gradient across the membrane. The catalytic sites are hosted primarily by the beta subunits. This Pseudomonas fluorescens (strain Pf0-1) protein is ATP synthase subunit beta.